The sequence spans 695 residues: Probable glucan endo-1,3-beta-glucosidase btgC (695 aa).

Disordered regions lie at residues 1-53, 117-140, 175-258, and 286-314; these read MSGP…THHG, RRGT…GSDN, GPAG…RSQA, and ETSY…STGS. Residues 1 to 317 are Cytoplasmic-facing; it reads MSGPHRTFSF…PKPSTGSRKR (317 aa). The segment covering 36-45 has biased composition (polar residues); that stretch reads PISNMSSSPG. Polar residues predominate over residues 188-198; that stretch reads HLGTSNSSQRN. Residues 231–241 are compositionally biased toward acidic residues; that stretch reads NPEEIADDGDD. The chain crosses the membrane as a helical; Signal-anchor for type II membrane protein span at residues 318 to 338; sequence GWIIGAILAVIIIGAIVGGAV. At 339–695 the chain is on the extracellular side; that stretch reads GGTIGHKDSG…IPDCGGKTAA (357 aa). Residues 346 to 372 form a disordered region; that stretch reads DSGDSASGSSASTQSASGDTDTNGDLD. Low complexity predominate over residues 349–366; sequence DSASGSSASTQSASGDTD. N415, N438, and N466 each carry an N-linked (GlcNAc...) asparagine glycan. Catalysis depends on E498, which acts as the Proton donor. Catalysis depends on E597, which acts as the Nucleophile. N642 carries an N-linked (GlcNAc...) asparagine glycan.

This sequence belongs to the glycosyl hydrolase 17 family.

The protein resides in the cell membrane. It catalyses the reaction Hydrolysis of (1-&gt;3)-beta-D-glucosidic linkages in (1-&gt;3)-beta-D-glucans.. Its function is as follows. Glucanases play a role in cell expansion during growth, in cell-cell fusion during mating, and in spore release during sporulation. This enzyme may be involved in beta-glucan degradation. Active on laminarin and lichenan. This chain is Probable glucan endo-1,3-beta-glucosidase btgC (btgC), found in Aspergillus clavatus (strain ATCC 1007 / CBS 513.65 / DSM 816 / NCTC 3887 / NRRL 1 / QM 1276 / 107).